A 114-amino-acid polypeptide reads, in one-letter code: Large ribosomal subunit protein bL17 (114 aa).

The protein belongs to the bacterial ribosomal protein bL17 family. As to quaternary structure, part of the 50S ribosomal subunit. Contacts protein L32.

In Halothermothrix orenii (strain H 168 / OCM 544 / DSM 9562), this protein is Large ribosomal subunit protein bL17.